The following is a 397-amino-acid chain: Protein ROH1D (397 aa).

Residues 247 to 267 form a helical membrane-spanning segment; sequence LIVPVYTMTTVLLFVMWALVA.

Belongs to the ROH1 family. As to quaternary structure, interacts with EXO70C2. As to expression, mostly expressed in mature pollen.

The protein localises to the membrane. The protein resides in the cytoplasm. Its subcellular location is the cytosol. In terms of biological role, involved in the regulation of plant growth, and modulates pollen development to ensure male fertility. May also affect the composition of the inner seed coat mucilage layer. The chain is Protein ROH1D from Arabidopsis thaliana (Mouse-ear cress).